Reading from the N-terminus, the 212-residue chain is Adenylate kinase (212 aa).

Position 10 to 15 (10 to 15 (GAGKGT)) interacts with ATP. Residues 30–59 (STGDMFRAAMANQTEMGRLAKSYIDKGELV) form an NMP region. AMP-binding positions include T31, R36, 57–59 (ELV), 86–89 (GYPR), and Q93. The segment at 127–159 (GRIINRKTGETFHKVFNPPVDYKEEDYYQREDD) is LID. Residues R128 and 137-138 (TF) contribute to the ATP site. Residues R156 and R167 each contribute to the AMP site. Position 195 (Q195) interacts with ATP.

As to quaternary structure, monomer.

The protein localises to the cytoplasm. It carries out the reaction AMP + ATP = 2 ADP. It functions in the pathway purine metabolism; AMP biosynthesis via salvage pathway; AMP from ADP: step 1/1. Its function is as follows. Catalyzes the reversible transfer of the terminal phosphate group between ATP and AMP. Plays an important role in cellular energy homeostasis and in adenine nucleotide metabolism. In Streptococcus pyogenes serotype M6 (strain ATCC BAA-946 / MGAS10394), this protein is Adenylate kinase.